Reading from the N-terminus, the 160-residue chain is Transcription elongation factor GreA (160 aa).

Residues 1–72 are a coiled coil; the sequence is MAEKTYPMTQ…QIQILETKIR (72 aa).

Belongs to the GreA/GreB family.

Necessary for efficient RNA polymerase transcription elongation past template-encoded arresting sites. The arresting sites in DNA have the property of trapping a certain fraction of elongating RNA polymerases that pass through, resulting in locked ternary complexes. Cleavage of the nascent transcript by cleavage factors such as GreA or GreB allows the resumption of elongation from the new 3'terminus. GreA releases sequences of 2 to 3 nucleotides. The chain is Transcription elongation factor GreA from Streptococcus agalactiae serotype Ia (strain ATCC 27591 / A909 / CDC SS700).